Here is a 150-residue protein sequence, read N- to C-terminus: Arginine repressor (150 aa).

It belongs to the ArgR family.

It localises to the cytoplasm. It participates in amino-acid biosynthesis; L-arginine biosynthesis [regulation]. Functionally, regulates arginine biosynthesis genes. The polypeptide is Arginine repressor (Symbiobacterium thermophilum (strain DSM 24528 / JCM 14929 / IAM 14863 / T)).